We begin with the raw amino-acid sequence, 1356 residues long: Pleckstrin homology domain-containing family H member 1 (1356 aa).

A coiled-coil region spans residues 27-172 (FRLQASKIRE…QDALEDLRMT (146 aa)). Disordered regions lie at residues 179 to 203 (VVPE…EQDS), 256 to 314 (HLQK…PKVR), and 354 to 414 (LHSP…PPLH). Composition is skewed to polar residues over residues 194–203 (PSDQPVEQDS), 256–265 (HLQKEGSPSQ), and 285–297 (VTAQ…GTKT). The stretch at 359–407 (SSKSEARAKVREEAEKMEMEALPPSGKQEERESLKSRRGELEDVELENK) forms a coiled coil. Basic and acidic residues-rich tracts occupy residues 362-377 (SEAR…KMEM) and 385-399 (KQEE…RGEL). Ser451 bears the Phosphoserine mark. PH domains follow at residues 572–666 (ALEK…SLLK) and 681–790 (KPTV…VAAG). Residue Ser739 is modified to Phosphoserine. The MyTH4 domain maps to 826–980 (YSQEGLCASL…PSRMEVVSIL (155 aa)). The region spanning 991-1327 (FSIPVHFANG…NHCSATVNLS (337 aa)) is the FERM domain.

The protein is Pleckstrin homology domain-containing family H member 1 (Plekhh1) of Mus musculus (Mouse).